We begin with the raw amino-acid sequence, 303 residues long: Type II methyltransferase M.MjaI (303 aa).

It belongs to the N(4)/N(6)-methyltransferase family. N(4) subfamily.

It catalyses the reaction a 2'-deoxycytidine in DNA + S-adenosyl-L-methionine = an N(4)-methyl-2'-deoxycytidine in DNA + S-adenosyl-L-homocysteine + H(+). In terms of biological role, a beta subtype methylase that recognizes the double-stranded sequence 5'-CTAG-3', methylates C-1 on both strands, and protects the DNA from cleavage by the MjaI endonuclease. The polypeptide is Type II methyltransferase M.MjaI (mjaIM) (Methanocaldococcus jannaschii (strain ATCC 43067 / DSM 2661 / JAL-1 / JCM 10045 / NBRC 100440) (Methanococcus jannaschii)).